The sequence spans 154 residues: Large ribosomal subunit protein uL30 (154 aa).

Residues 114–146 are disordered; the sequence is PTLRLHPPRGGHDGVKHPVKEGGQLGKHDTEGI. Residues 123–144 show a composition bias toward basic and acidic residues; the sequence is GGHDGVKHPVKEGGQLGKHDTE.

This sequence belongs to the universal ribosomal protein uL30 family. Part of the 50S ribosomal subunit. Binds 5S rRNA.

Functionally, this is one of 5 proteins that mediate the attachment of the 5S rRNA onto the large ribosomal subunit, stabilizing the orientation of adjacent RNA domains. The chain is Large ribosomal subunit protein uL30 from Haloarcula marismortui (strain ATCC 43049 / DSM 3752 / JCM 8966 / VKM B-1809) (Halobacterium marismortui).